A 472-amino-acid chain; its full sequence is MDSIQQDRLSSLPDILLIMIISFLPLKECVRTSVLSKRWRYLCLETTNLSFKESDYVNPDITDAEYSRIVAYRSFFCSVDKWVSITQHQVVESFEICFSHLVGFEDKIDALIEYAVSTRVKNLVVDLSNPSWRSNGDISYRHFMYTLPKSVYSLTTLESLKIYGCKFDPSKFVNPVLLRSLSIGWVRLENLHSLLSKSPSLQSLSIKNCWGVDITSMAGQFRELVIEHSDFSYMQCAFELPRIHSFKYSGELFEFYFDVVNVIIPNVYLDFGEERVYDLQSQSSRISGEVISRIINDLRAAETLTVCPYILQVIPECEKPSDLLQPMETRHLVLRTKMHTKEFNGIILLLNNCPNLETLGFDILTPCPFSATSSDEGIDPKTYWMQKRTCKSLRKTLKVVVIRNFCGSSNELNVLRYLIRSASGAGDALERVELYVPNGMEESQAMVVFAKAEMLQRTSKHVQVLCAQLLKK.

The F-box domain maps to 6 to 54 (QDRLSSLPDILLIMIISFLPLKECVRTSVLSKRWRYLCLETTNLSFKES). LRR repeat units lie at residues 58–87 (NPDI…SITQ), 135–164 (NGDI…KIYG), 183–208 (IGWV…SIKN), 225–250 (VIEH…KYSG), 283–308 (SSRI…TVCP), and 338–363 (MHTK…GFDI).

In Arabidopsis thaliana (Mouse-ear cress), this protein is Putative F-box/LRR-repeat protein At5g54820.